The following is a 444-amino-acid chain: Chromosomal replication initiator protein DnaA (444 aa).

The tract at residues 1–66 (MKSEIIESLK…SKTLRELFGK (66 aa)) is domain I, interacts with DnaA modulators. The domain II stretch occupies residues 66-100 (KPMDFRIEHASAKTEEKLDSNEDEPLVKKRPLILT). The interval 101-317 (PLNPILTFEN…GALVKLIMYQ (217 aa)) is domain III, AAA+ region. ATP-binding residues include Gly144, Gly146, Lys147, and Thr148. The interval 318 to 444 (QISGEKVDLQ…VTGQILDQSV (127 aa)) is domain IV, binds dsDNA.

It belongs to the DnaA family. As to quaternary structure, oligomerizes as a right-handed, spiral filament on DNA at oriC.

The protein localises to the cytoplasm. In terms of biological role, plays an essential role in the initiation and regulation of chromosomal replication. ATP-DnaA binds to the origin of replication (oriC) to initiate formation of the DNA replication initiation complex once per cell cycle. Binds the DnaA box (a 9 base pair repeat at the origin) and separates the double-stranded (ds)DNA. Forms a right-handed helical filament on oriC DNA; dsDNA binds to the exterior of the filament while single-stranded (ss)DNA is stabiized in the filament's interior. The ATP-DnaA-oriC complex binds and stabilizes one strand of the AT-rich DNA unwinding element (DUE), permitting loading of DNA polymerase. After initiation quickly degrades to an ADP-DnaA complex that is not apt for DNA replication. Binds acidic phospholipids. This chain is Chromosomal replication initiator protein DnaA, found in Pseudothermotoga lettingae (strain ATCC BAA-301 / DSM 14385 / NBRC 107922 / TMO) (Thermotoga lettingae).